The chain runs to 215 residues: Protein Syd (215 aa).

This sequence belongs to the Syd family.

It localises to the cell inner membrane. Functionally, interacts with the SecY protein in vivo. May bind preferentially to an uncomplexed state of SecY, thus functioning either as a chelating agent for excess SecY in the cell or as a regulatory factor that negatively controls the translocase function. This chain is Protein Syd, found in Shewanella amazonensis (strain ATCC BAA-1098 / SB2B).